The primary structure comprises 374 residues: MTTSASSHLNKGIKQVYMSLPQGEKVQAMYIWIDGTGEGLRCKTRTLDSEPKCVEELPEWNFDGSSTLQSEGSNSDMYLVPAAMFRDPFRKDPNKLVLCESFQVQFEGPAETNLRHTCKRIMDMVSNQHPWFGMEQEYTLMGTDGHPFGWPSNGFPGPQGPYYCGVGADRAYGRDIVEAHYRACLYAGVKIAGTNAEVMPAQWEFQIGPCEGISMGDHLWVARFILHRVCEDFGVIATFDPKPIPGNWNGAGCHTNFSTKAMREENGLKYIEEAIEKLSKRHQYHIRAYDPKGGLDNARRLTGFHETSNINDFSAGVANRSASIRIPRTVGQEKKGYFEDRRPSANCDPFSVTEALIRTCLLNETGDEPFQYKN.

Positions 2–25 (TTSASSHLNKGIKQVYMSLPQGEK) are required for glutamine-induced ubiquitination by CRL4(CRBN) and proteasomal degradation. Residues Lys11 and Lys14 each carry the N6-acetyllysine modification. The 83-residue stretch at 24–106 (EKVQAMYIWI…VLCESFQVQF (83 aa)) folds into the GS beta-grasp domain. The GS catalytic domain occupies 114-374 (LRHTCKRIMD…TGDEPFQYKN (261 aa)). Glu135 contributes to the ATP binding site. Positions 135, 137, 197, and 204 each coordinate Mn(2+). An ATP-binding site is contributed by 204-209 (EFQIGP). Residue 247–248 (NW) coordinates L-glutamate. His254 provides a ligand contact to Mn(2+). Residues 256 to 258 (NFS), Arg320, and Arg325 each bind ATP. Arg320 serves as a coordination point for L-glutamate. 337 to 339 (YFE) provides a ligand contact to ADP. Glu339 provides a ligand contact to Mn(2+). Arg341 contacts L-glutamate. Residue Ser344 is modified to Phosphoserine.

Belongs to the glutamine synthetase family. In terms of assembly, decamer; composed of two pentamers. Interacts with PALMD. Interacts with RHOJ. Interacts with BEST2; this interaction tethers a fraction of GLUL to the membrane, causing a decrease of cytosolic glutamine synthase (GS) activity and inhibits the chloride channel activity of BEST2 by affecting the gating at the aperture in the absence of intracellular glutamate. It depends on Mg(2+) as a cofactor. Mn(2+) serves as cofactor. Palmitoylated; undergoes autopalmitoylation. Post-translationally, acetylated by EP300/p300; acetylation is stimulated by increased glutamine levels and promotes ubiquitin-mediated proteasomal degradation. In terms of processing, ubiquitinated by ZNRF1. Ubiquitinated by the DCX (DDB1-CUL4-X-box) E3 ubiquitin-protein ligase complex called CRL4(CRBN), leading to proteasomal degradation.

It localises to the cytoplasm. The protein resides in the cytosol. Its subcellular location is the microsome. The protein localises to the mitochondrion. It is found in the cell membrane. The catalysed reaction is L-glutamate + NH4(+) + ATP = L-glutamine + ADP + phosphate + H(+). It catalyses the reaction L-cysteinyl-[protein] + hexadecanoyl-CoA = S-hexadecanoyl-L-cysteinyl-[protein] + CoA. With respect to regulation, glutamine synthetase activity is inhibited by methionine sulfoximine (MSO). Its function is as follows. Glutamine synthetase that catalyzes the ATP-dependent conversion of glutamate and ammonia to glutamine. Its role depends on tissue localization: in the brain, it regulates the levels of toxic ammonia and converts neurotoxic glutamate to harmless glutamine, whereas in the liver, it is one of the enzymes responsible for the removal of ammonia. Plays a key role in ammonium detoxification during erythropoiesis: the glutamine synthetase activity is required to remove ammonium generated by porphobilinogen deaminase (HMBS) during heme biosynthesis to prevent ammonium accumulation and oxidative stress. Essential for proliferation of fetal skin fibroblasts. Independently of its glutamine synthetase activity, required for endothelial cell migration during vascular development. Involved in angiogenesis by regulating membrane localization and activation of the GTPase RHOJ, possibly by promoting RHOJ palmitoylation. May act as a palmitoyltransferase for RHOJ: able to autopalmitoylate and then transfer the palmitoyl group to RHOJ. Plays a role in ribosomal 40S subunit biogenesis. Through the interaction with BEST2, inhibits BEST2 channel activity by affecting the gating at the aperture in the absence of intracellular L-glutamate, but sensitizes BEST2 to intracellular L-glutamate, which promotes the opening of BEST2 and thus relieves its inhibitory effect on BEST2. This Macaca fascicularis (Crab-eating macaque) protein is Glutamine synthetase.